A 264-amino-acid chain; its full sequence is Glutamate racemase (264 aa).

Substrate-binding positions include 9-10 and 41-42; these read DS and YG. Cys72 (proton donor/acceptor) is an active-site residue. 73–74 lines the substrate pocket; that stretch reads NT. Cys183 acts as the Proton donor/acceptor in catalysis. 184 to 185 contributes to the substrate binding site; that stretch reads TH.

It belongs to the aspartate/glutamate racemases family.

The enzyme catalyses L-glutamate = D-glutamate. It participates in cell wall biogenesis; peptidoglycan biosynthesis. In terms of biological role, provides the (R)-glutamate required for cell wall biosynthesis. In Geobacillus kaustophilus (strain HTA426), this protein is Glutamate racemase.